Here is a 220-residue protein sequence, read N- to C-terminus: Histone deacetylase complex subunit SAP30 (220 aa).

Residues 1 to 129 form an interaction with NCOR1 region; the sequence is MNGFTPEEMS…QSVRNRRKRK (129 aa). At T5 the chain carries Phosphothreonine. The Atypical zinc finger occupies 67-115; that stretch reads CCLREDGERCGRAAGNASFSKRIQKSISQKKVKIELDKSARHLYICDYH. Residue K87 forms a Glycyl lysine isopeptide (Lys-Gly) (interchain with G-Cter in SUMO2) linkage. Residues 123 to 143 are disordered; it reads RNRRKRKGSDDDGGDSPVQDI. The segment at 130–220 is interaction with SIN3A; it reads GSDDDGGDSP…SDLKADSGVH (91 aa). Phosphoserine occurs at positions 131 and 138. Residue T145 is modified to Phosphothreonine. Glycyl lysine isopeptide (Lys-Gly) (interchain with G-Cter in SUMO2) cross-links involve residues K194 and K214.

Belongs to the SAP30 family. Component of the histone deacetylase complex that includes at least SIN3A, HDAC1 and HDAC2. Found in a complex composed of at least SINHCAF, SIN3A, HDAC1, SAP30, RBBP4, OGT and TET1. Interacts with HDAC1. Interacts with SIN3A, SIN3B, HDAC2, RBBP4 and NCOR1. Interacts directly with SAMSN1. Interacts with HCFC1. Interacts with SAP30BP.

Its subcellular location is the nucleus. Involved in the functional recruitment of the Sin3-histone deacetylase complex (HDAC) to a specific subset of N-CoR corepressor complexes. Capable of transcription repression by N-CoR. Active in deacetylating core histone octamers (when in a complex) but inactive in deacetylating nucleosomal histones. This is Histone deacetylase complex subunit SAP30 from Mus musculus (Mouse).